Consider the following 314-residue polypeptide: Acetyl-coenzyme A carboxylase carboxyl transferase subunit alpha (314 aa).

One can recognise a CoA carboxyltransferase C-terminal domain in the interval 32-289 (EIDMLEASLK…KKMFLKHLNE (258 aa)).

It belongs to the AccA family. As to quaternary structure, acetyl-CoA carboxylase is a heterohexamer composed of biotin carboxyl carrier protein (AccB), biotin carboxylase (AccC) and two subunits each of ACCase subunit alpha (AccA) and ACCase subunit beta (AccD).

It localises to the cytoplasm. It catalyses the reaction N(6)-carboxybiotinyl-L-lysyl-[protein] + acetyl-CoA = N(6)-biotinyl-L-lysyl-[protein] + malonyl-CoA. Its pathway is lipid metabolism; malonyl-CoA biosynthesis; malonyl-CoA from acetyl-CoA: step 1/1. Functionally, component of the acetyl coenzyme A carboxylase (ACC) complex. First, biotin carboxylase catalyzes the carboxylation of biotin on its carrier protein (BCCP) and then the CO(2) group is transferred by the carboxyltransferase to acetyl-CoA to form malonyl-CoA. This Staphylococcus epidermidis (strain ATCC 35984 / DSM 28319 / BCRC 17069 / CCUG 31568 / BM 3577 / RP62A) protein is Acetyl-coenzyme A carboxylase carboxyl transferase subunit alpha.